Reading from the N-terminus, the 448-residue chain is Tubulin alpha-4A chain (448 aa).

The MREC motif signature appears at 1–4; that stretch reads MREC. Gln-11 is a GTP binding site. Lys-40 is subject to N6-acetyllysine. Ser-48 bears the Phosphoserine mark. Glu-71 provides a ligand contact to GTP. Glu-71 contributes to the Mg(2+) binding site. Tyr-83 is subject to 3'-nitrotyrosine. GTP is bound by residues Ser-140, Gly-144, Thr-145, Thr-179, Asn-206, and Asn-228. Glu-254 is a catalytic residue. The residue at position 432 (Tyr-432) is a Phosphotyrosine. Ser-439 carries the post-translational modification Phosphoserine.

This sequence belongs to the tubulin family. In terms of assembly, dimer of alpha and beta chains. A typical microtubule is a hollow water-filled tube with an outer diameter of 25 nm and an inner diameter of 15 nM. Alpha-beta heterodimers associate head-to-tail to form protofilaments running lengthwise along the microtubule wall with the beta-tubulin subunit facing the microtubule plus end conferring a structural polarity. Microtubules usually have 13 protofilaments but different protofilament numbers can be found in some organisms and specialized cells. Interacts with CFAP157. Mg(2+) is required as a cofactor. Post-translationally, some glutamate residues at the C-terminus are polyglycylated, resulting in polyglycine chains on the gamma-carboxyl group. Glycylation is mainly limited to tubulin incorporated into axonemes (cilia and flagella) whereas glutamylation is prevalent in neuronal cells, centrioles, axonemes, and the mitotic spindle. Both modifications can coexist on the same protein on adjacent residues, and lowering polyglycylation levels increases polyglutamylation, and reciprocally. Cilia and flagella glycylation is required for their stability and maintenance. Flagella glycylation controls sperm motility. In terms of processing, some glutamate residues at the C-terminus are polyglutamylated, resulting in polyglutamate chains on the gamma-carboxyl group. Polyglutamylation plays a key role in microtubule severing by spastin (SPAST). SPAST preferentially recognizes and acts on microtubules decorated with short polyglutamate tails: severing activity by SPAST increases as the number of glutamates per tubulin rises from one to eight, but decreases beyond this glutamylation threshold. Glutamylation is also involved in cilia motility. Acetylation of alpha chains at Lys-40 is located inside the microtubule lumen. This modification has been correlated with increased microtubule stability, intracellular transport and ciliary assembly. Post-translationally, methylation of alpha chains at Lys-40 is found in mitotic microtubules and is required for normal mitosis and cytokinesis contributing to genomic stability. In terms of processing, although this tubulin does not encode a C-terminal tyrosine, a C-terminal tyrosine can be added post-translationally by the tubulin tyrosine ligase (TTL). It can then undergo a detyrosination cycle by the tubulin tyrosine carboxypeptidase (MATCAP1/KIAA0895L).

It is found in the cytoplasm. It localises to the cytoskeleton. The enzyme catalyses GTP + H2O = GDP + phosphate + H(+). In terms of biological role, tubulin is the major constituent of microtubules, a cylinder consisting of laterally associated linear protofilaments composed of alpha- and beta-tubulin heterodimers. Microtubules grow by the addition of GTP-tubulin dimers to the microtubule end, where a stabilizing cap forms. Below the cap, tubulin dimers are in GDP-bound state, owing to GTPase activity of alpha-tubulin. The chain is Tubulin alpha-4A chain (TUBA4A) from Macaca fascicularis (Crab-eating macaque).